We begin with the raw amino-acid sequence, 476 residues long: Aspartyl/glutamyl-tRNA(Asn/Gln) amidotransferase subunit B (476 aa).

It belongs to the GatB/GatE family. GatB subfamily. Heterotrimer of A, B and C subunits.

It catalyses the reaction L-glutamyl-tRNA(Gln) + L-glutamine + ATP + H2O = L-glutaminyl-tRNA(Gln) + L-glutamate + ADP + phosphate + H(+). It carries out the reaction L-aspartyl-tRNA(Asn) + L-glutamine + ATP + H2O = L-asparaginyl-tRNA(Asn) + L-glutamate + ADP + phosphate + 2 H(+). Its function is as follows. Allows the formation of correctly charged Asn-tRNA(Asn) or Gln-tRNA(Gln) through the transamidation of misacylated Asp-tRNA(Asn) or Glu-tRNA(Gln) in organisms which lack either or both of asparaginyl-tRNA or glutaminyl-tRNA synthetases. The reaction takes place in the presence of glutamine and ATP through an activated phospho-Asp-tRNA(Asn) or phospho-Glu-tRNA(Gln). The sequence is that of Aspartyl/glutamyl-tRNA(Asn/Gln) amidotransferase subunit B from Thermosipho melanesiensis (strain DSM 12029 / CIP 104789 / BI429).